The primary structure comprises 216 residues: MSCLPALDKFLQNYHQAYLTSLGELPRYYPQGEPSVCIQGEFHADLDQAVSWQPVKREVEGSFANVEHALELTLWPEINHFYGQYFSAPLLFDSEWGTGELLQVWNEDDFTCLQQNLIGHLMMKKKLKQPPTWFIGLLDEGDKMLTINNSDGSVWIELPGEIPTQQLSPSLAEFIGALSPRIAPPVKHEELPMPALEHPGIFASFKRMWQNLFGKR.

This sequence belongs to the Syd family.

Its subcellular location is the cell inner membrane. Functionally, interacts with the SecY protein in vivo. May bind preferentially to an uncomplexed state of SecY, thus functioning either as a chelating agent for excess SecY in the cell or as a regulatory factor that negatively controls the translocase function. The sequence is that of Protein Syd from Shewanella baltica (strain OS155 / ATCC BAA-1091).